The chain runs to 339 residues: UDP-N-acetylenolpyruvoylglucosamine reductase (339 aa).

An FAD-binding PCMH-type domain is found at 18-189; the sequence is GVEVKAKWFA…LRVRFALNRV (172 aa). Arginine 166 is a catalytic residue. Serine 239 serves as the catalytic Proton donor. Glutamate 335 is a catalytic residue.

This sequence belongs to the MurB family. The cofactor is FAD.

Its subcellular location is the cytoplasm. The enzyme catalyses UDP-N-acetyl-alpha-D-muramate + NADP(+) = UDP-N-acetyl-3-O-(1-carboxyvinyl)-alpha-D-glucosamine + NADPH + H(+). It participates in cell wall biogenesis; peptidoglycan biosynthesis. In terms of biological role, cell wall formation. This Pseudomonas fluorescens (strain ATCC BAA-477 / NRRL B-23932 / Pf-5) protein is UDP-N-acetylenolpyruvoylglucosamine reductase.